Consider the following 689-residue polypeptide: Glycine--tRNA ligase beta subunit (689 aa).

The protein belongs to the class-II aminoacyl-tRNA synthetase family. As to quaternary structure, tetramer of two alpha and two beta subunits.

It is found in the cytoplasm. It catalyses the reaction tRNA(Gly) + glycine + ATP = glycyl-tRNA(Gly) + AMP + diphosphate. This is Glycine--tRNA ligase beta subunit from Shewanella sp. (strain W3-18-1).